A 344-amino-acid chain; its full sequence is N-acetyl-gamma-glutamyl-phosphate reductase (344 aa).

Cys-149 is an active-site residue.

Belongs to the NAGSA dehydrogenase family. Type 1 subfamily.

The protein resides in the cytoplasm. It carries out the reaction N-acetyl-L-glutamate 5-semialdehyde + phosphate + NADP(+) = N-acetyl-L-glutamyl 5-phosphate + NADPH + H(+). The protein operates within amino-acid biosynthesis; L-arginine biosynthesis; N(2)-acetyl-L-ornithine from L-glutamate: step 3/4. In terms of biological role, catalyzes the NADPH-dependent reduction of N-acetyl-5-glutamyl phosphate to yield N-acetyl-L-glutamate 5-semialdehyde. The polypeptide is N-acetyl-gamma-glutamyl-phosphate reductase (Syntrophobacter fumaroxidans (strain DSM 10017 / MPOB)).